The chain runs to 308 residues: Mitochondrial import receptor subunit TOM40B (308 aa).

The segment at 1-29 is disordered; that stretch reads MGNTLGLAPMGALPRRSPRREEPLPNPGS. Residues 281-308 are required for mitochondrial targeting; it reads PLPVTLALGAFLNHWRNRFHCGFSITVG.

Belongs to the Tom40 family. Forms part of the preprotein translocase of the outer mitochondrial membrane (TOM complex) containing TOMM22, TOMM40, TOMM40L and TOMM70. Interacts with mitochondrial targeting sequences.

It localises to the mitochondrion outer membrane. In terms of biological role, potential channel-forming protein implicated in import of protein precursors into mitochondria. This Bos taurus (Bovine) protein is Mitochondrial import receptor subunit TOM40B.